A 308-amino-acid chain; its full sequence is Olfactory receptor 2T7 (308 aa).

The Extracellular segment spans residues 1–17 (MPTLSFWVCSATPVSPG). Residues 18–40 (FFALILLVFVTSIASNVVKIILI) form a helical membrane-spanning segment. The Cytoplasmic portion of the chain corresponds to 41–51 (HIDSRLHTPMY). Residues 52–74 (FLLSQLSLRDILYISTIVPKMLV) traverse the membrane as a helical segment. Residues 75 to 88 (DQVMSQRAISFAGC) are Extracellular-facing. Cysteine 88 and cysteine 170 are oxidised to a cystine. Residues 89–109 (TAQHFLYLTLAGAEFFLLGLM) traverse the membrane as a helical segment. Topologically, residues 110 to 130 (SCDRYVAICNPLHYPDLMSRK) are cytoplasmic. The helical transmembrane segment at 131 to 151 (ICWLIVAAAWLGGSIDGFLLT) threads the bilayer. The Extracellular segment spans residues 152-188 (PVTMQFPFCASREINHFFCEVPALLKLSCTDTSAYET). Residues 189–209 (AMYVCCIMMLLIPFSVISGSY) traverse the membrane as a helical segment. Over 210 to 235 (TRILITVYRMSEAEGRRKAVATCSSH) the chain is Cytoplasmic. A helical transmembrane segment spans residues 236-256 (MVVVSLFYGAAMYTYVLPHSY). At 257–262 (HTPEQD) the chain is on the extracellular side. Residues 263–283 (KAVSAFYTILTPMLNPLIYSL) traverse the membrane as a helical segment. At 284-308 (RNKDVTGALQKVVGRCVSSGKVTTF) the chain is on the cytoplasmic side.

This sequence belongs to the G-protein coupled receptor 1 family.

It localises to the cell membrane. Odorant receptor. This Homo sapiens (Human) protein is Olfactory receptor 2T7 (OR2T7).